Reading from the N-terminus, the 484-residue chain is CUGBP Elav-like family member 2 (484 aa).

Necessary for nuclear export regions lie at residues 1-89 (MNGA…PGMH) and 90-178 (HPIQ…EGCS). 3 RRM domains span residues 16–99 (IKTF…PADS), 108–188 (RKLF…FADT), and 399–477 (ANLF…LKRS). Residues 188–240 (TQKDKEQRRLQQQLAQQMQQLNTATWGNLTGLGGLTPQYLALLQQATSSSNLG) form a necessary for splicing activity region. The necessary for nuclear localization stretch occupies residues 347 to 399 (GLTNGTAGTMDALTQAYSGIQQYAAAALPTLYSQSLLQQQSAAGSQKEGPEGA). Residues 426 to 484 (ISAKVFIDKQTNLSKCFGFVSYDNPVSAQAAIQAMNGFQIGMKRLKVQLKRSKNDSKPY) are necessary for nuclear localization and splicing activity.

The protein belongs to the CELF/BRUNOL family. As to expression, expressed in heart.

It localises to the nucleus. Its subcellular location is the cytoplasm. In terms of biological role, RNA-binding protein implicated in the regulation of several post-transcriptional events. May be involved in mRNA translation repression and stability. Mediates exon inclusion in TNNT2 pre-mRNA. The protein is CUGBP Elav-like family member 2 (CELF2) of Gallus gallus (Chicken).